A 466-amino-acid polypeptide reads, in one-letter code: Asparagine--tRNA ligase (466 aa).

The protein belongs to the class-II aminoacyl-tRNA synthetase family. In terms of assembly, homodimer.

Its subcellular location is the cytoplasm. It carries out the reaction tRNA(Asn) + L-asparagine + ATP = L-asparaginyl-tRNA(Asn) + AMP + diphosphate + H(+). The polypeptide is Asparagine--tRNA ligase (Xylella fastidiosa (strain Temecula1 / ATCC 700964)).